The following is a 422-amino-acid chain: E3 ubiquitin-protein ligase IE2 (422 aa).

Positions 1-10 (MSRQINAVTP) are enriched in polar residues. Disordered regions lie at residues 1 to 86 (MSRQ…VQII) and 165 to 215 (SPRS…EGEE). The segment covering 14–26 (SRRHRLSLSRRRI) has biased composition (basic residues). Low complexity predominate over residues 36–63 (PSSSSRSQPSSSSRSQPYSSSRSQPYSS). The span at 71–80 (ERSQEQRVSE) shows a compositional bias: basic and acidic residues. Residues 179–196 (DVLSQSPDLFDSPQSPQQ) show a composition bias toward polar residues. The segment covering 200–215 (ELEDEDEEEEEEEGEE) has biased composition (acidic residues). Residues 220–268 (CNICFTTLKDTKNVDSSFVTSIDCNHAVCFKCYVRIIMDNSTYKCFCSA) form an RING-type; degenerate zinc finger. The stretch at 314–414 (IDLNDVERLE…RRNSELVAEL (101 aa)) forms a coiled coil.

The protein belongs to the alphabaculovirus IE2 protein family. In terms of assembly, homooligomer. In terms of processing, auto-ubiquitinated.

The protein localises to the host nucleus. The catalysed reaction is S-ubiquitinyl-[E2 ubiquitin-conjugating enzyme]-L-cysteine + [acceptor protein]-L-lysine = [E2 ubiquitin-conjugating enzyme]-L-cysteine + N(6)-ubiquitinyl-[acceptor protein]-L-lysine.. Its function is as follows. RING-finger E3 ubiquitin ligase that plays an important regulatory role during the initial stages of infection. Migrates to specific nuclear foci early in infection supposely to prepare the sites for viral replication by targeting and ubiquitinating host proteins. This Bombyx mori nuclear polyhedrosis virus (BmNPV) protein is E3 ubiquitin-protein ligase IE2 (IE2).